Consider the following 492-residue polypeptide: N-succinylglutamate 5-semialdehyde dehydrogenase (492 aa).

NAD(+) is bound at residue 220–225 (GSANTG). Residues Glu243 and Cys277 contribute to the active site.

This sequence belongs to the aldehyde dehydrogenase family. AstD subfamily.

It carries out the reaction N-succinyl-L-glutamate 5-semialdehyde + NAD(+) + H2O = N-succinyl-L-glutamate + NADH + 2 H(+). It functions in the pathway amino-acid degradation; L-arginine degradation via AST pathway; L-glutamate and succinate from L-arginine: step 4/5. Functionally, catalyzes the NAD-dependent reduction of succinylglutamate semialdehyde into succinylglutamate. The polypeptide is N-succinylglutamate 5-semialdehyde dehydrogenase (Shigella flexneri).